Here is a 383-residue protein sequence, read N- to C-terminus: Gap junction alpha-1 protein (383 aa).

Residues 2–23 (GDWSALGKLLDKVQAYSTAGGK) lie on the Cytoplasmic side of the membrane. Ser-5 carries the phosphoserine modification. Residues 24-44 (VWLSVLFIFRILLLGTAVESA) form a helical membrane-spanning segment. Residues 45–76 (WGDEQSAFRCNTQQPGCENVCYDKSFPISHVR) lie on the Extracellular side of the membrane. 2 disulfides stabilise this stretch: Cys-54–Cys-193 and Cys-188–Cys-199. The chain crosses the membrane as a helical span at residues 77 to 97 (FWVLQIIFVSVPTLLYLAHVF). Topologically, residues 98 to 156 (YVMRKEEKLNKKEEELKVVAQTDGANVDMHLKQIEIKKFKYGIEEHGKVKMRGGLLRTY) are cytoplasmic. Lys-145 participates in a covalent cross-link: Glycyl lysine isopeptide (Lys-Gly) (interchain with G-Cter in SUMO). A helical membrane pass occupies residues 157 to 177 (IISILFKSVFEVAFLLIQWYI). At 178-208 (YGFSLSAVYTCKRDPCPHQVDCFLSRPTEKT) the chain is on the extracellular side. Residues 209-229 (IFIIFMLVVSLVSLALNIIEL) form a helical membrane-spanning segment. Residues 230–383 (FYVFFKGVKD…SRPRPDDLEI (154 aa)) are Cytoplasmic-facing. Lys-238 is covalently cross-linked (Glycyl lysine isopeptide (Lys-Gly) (interchain with G-Cter in SUMO)). The interval 245–383 (SDPYHTTTGP…SRPRPDDLEI (139 aa)) is interaction with NOV. Tyr-248 bears the Phosphotyrosine mark. Residues Ser-256, Ser-258, and Ser-263 each carry the phosphoserine modification. Positions 265-383 (KYAYFNGCSS…SRPRPDDLEI (119 aa)) are interaction with UBQLN4. Cys-272 bears the S-nitrosocysteine mark. Thr-276 carries the phosphothreonine modification. Phosphoserine occurs at positions 307 and 315. The span at 318-333 (QNRMGQAGSTISNSHA) shows a compositional bias: polar residues. The tract at residues 318–383 (QNRMGQAGST…SRPRPDDLEI (66 aa)) is disordered. Phosphoserine; by CK1 is present on Ser-326. Thr-327 bears the Phosphothreonine mark. Phosphoserine; by CK1 is present on residues Ser-329 and Ser-331. Residues 339–352 (PDDHQNSKKLDAGH) show a composition bias toward basic and acidic residues. Residues Ser-345 and Ser-366 each carry the phosphoserine modification. Over residues 363 to 375 (RPSSRASSRASSR) the composition is skewed to low complexity. Position 369 is a phosphoserine; by PKC/PRKCG and PKC/PRKCD (Ser-369). Residues Ser-370 and Ser-374 each carry the phosphoserine modification.

Belongs to the connexin family. Alpha-type (group II) subfamily. A connexon is composed of a hexamer of connexins. Interacts with SGSM3. Interacts with RIC1/CIP150. Interacts with CNST and CSNK1D. Interacts (via C-terminus) with TJP1. Interacts (via C-terminus) with SRC (via SH3 domain). Interacts (not ubiquitinated) with UBQLN4 (via UBA domain). Interacts with NOV. Interacts with TMEM65. Interacts with ANK3/ANKG and PKP2. Post-translationally, phosphorylation at Ser-326, Ser-329 and Ser-331 by CK1 modulates gap junction assembly. Phosphorylated at Ser-369 by PRKCG; phosphorylation induces disassembly of gap junction plaques and inhibition of gap junction activity. Phosphorylation at Ser-369 by PRKCD triggers its internalization into small vesicles leading to proteasome-mediated degradation. Sumoylated with SUMO1, SUMO2 and SUMO3, which may regulate the level of functional Cx43 gap junctions at the plasma membrane. May be desumoylated by SENP1 or SENP2. In terms of processing, acetylated in the developing cortex; leading to delocalization from the cell membrane.

Its subcellular location is the cell membrane. The protein localises to the cell junction. It localises to the gap junction. It is found in the endoplasmic reticulum. Gap junction protein that acts as a regulator of bladder capacity. A gap junction consists of a cluster of closely packed pairs of transmembrane channels, the connexons, through which materials of low MW diffuse from one cell to a neighboring cell. May play a critical role in the physiology of hearing by participating in the recycling of potassium to the cochlear endolymph. Negative regulator of bladder functional capacity: acts by enhancing intercellular electrical and chemical transmission, thus sensitizing bladder muscles to cholinergic neural stimuli and causing them to contract. May play a role in cell growth inhibition through the regulation of NOV expression and localization. Plays an essential role in gap junction communication in the ventricles. This is Gap junction alpha-1 protein (GJA1) from Bos taurus (Bovine).